The sequence spans 549 residues: Probable glucuronosyltransferase Os01g0157700 (549 aa).

The Cytoplasmic segment spans residues 1–16 (MDSEERSKKRLRLWSR). The helical; Signal-anchor for type II membrane protein transmembrane segment at 17–37 (AVVHFSLCFAIGVFAALLPLA) threads the bilayer. At 38–549 (ATGATSIDSI…TPEEGKTKEG (512 aa)) the chain is on the lumenal side. N-linked (GlcNAc...) asparagine glycans are attached at residues Asn112, Asn139, Asn214, Asn229, Asn240, Asn251, Asn264, Asn269, and Asn300. Residues 232–252 (ETTWDSSSNTTQTTWDSSSNK) form a disordered region. A compositionally biased stretch (basic and acidic residues) spans 350 to 363 (IEQATPEKESLTKG). Disordered regions lie at residues 350–371 (IEQATPEKESLTKGDEEESHDM), 413–432 (EQETPEKENLTKGEEKESHD), and 441–524 (KIEE…KETH). Residues Asn421 and Asn452 are each glycosylated (N-linked (GlcNAc...) asparagine). Basic and acidic residues-rich tracts occupy residues 441–465 (KIEEQETPEKENLTKGDEKESHDMM), 472–496 (KIDEQETTEKESLTKGDEKESHDMM), and 503–524 (KIEEQETPEKESLTKGDEKETH).

The protein belongs to the glycosyltransferase 43 family.

Its subcellular location is the golgi apparatus membrane. Functionally, involved in the synthesis of glucuronoxylan hemicellulose in secondary cell walls. The sequence is that of Probable glucuronosyltransferase Os01g0157700 from Oryza sativa subsp. japonica (Rice).